The sequence spans 385 residues: AA13 family lytic polysaccharide monooxygenase aasA (385 aa).

The first 18 residues, 1–18 (MKSLLALVAGNLVTAVSG), serve as a signal peptide directing secretion. Residue H19 participates in Cu(2+) binding. H19 bears the Methylhistidine mark. Residues 19–248 (HGYLTVPASR…AQVYLHCADI (230 aa)) are N-terminal catalytic module. 7 disulfide bridges follow: C40/C43, C66/C245, C102/C203, C118/C145, C153/C161, C167/C173, and C181/C192. Residue H109 participates in Cu(2+) binding. The N-linked (GlcNAc...) asparagine glycan is linked to N120. Y242 serves as a coordination point for Cu(2+). The interval 254–276 (SGSSPSPTSTTSTATSTTTPSST) is disordered. Positions 256 to 276 (SSPSPTSTTSTATSTTTPSST) are enriched in low complexity. Residues 278–385 (CASAISIPVT…TTATESGAWR (108 aa)) form the CBM20 domain. N364 carries N-linked (GlcNAc...) asparagine glycosylation.

This sequence belongs to the polysaccharide monooxygenase AA13 family. It depends on Cu(2+) as a cofactor. Post-translationally, the catalytically essential N-terminal histidine His-19 is post-translationally modified by methylation to prevent protonation of the histidine side chain, and protect the critical active site of the enzyme from oxidative damage.

It is found in the secreted. It catalyses the reaction starch + reduced acceptor + O2 = D-glucono-1,5-lactone-terminated malto-oligosaccharides + short-chain malto-oligosaccharides + acceptor + H2O.. Its function is as follows. Starch-active polysaccharide monooxygenase that oxidizes the C1 position of starch substrates, but not in cellulose, chitin, polygalacturonan or esterified pectin, nor with Arabidopsis stem cell walls. Catalysis by LPMOs requires the reduction of the active-site copper from Cu(II) to Cu(I) by a reducing agent and H(2)O(2) or O(2) as a cosubstrate. The polypeptide is AA13 family lytic polysaccharide monooxygenase aasA (Emericella nidulans (strain FGSC A4 / ATCC 38163 / CBS 112.46 / NRRL 194 / M139) (Aspergillus nidulans)).